The chain runs to 100 residues: Urease subunit gamma (100 aa).

The protein belongs to the urease gamma subunit family. In terms of assembly, heterotrimer of UreA (gamma), UreB (beta) and UreC (alpha) subunits. Three heterotrimers associate to form the active enzyme.

It localises to the cytoplasm. The catalysed reaction is urea + 2 H2O + H(+) = hydrogencarbonate + 2 NH4(+). It participates in nitrogen metabolism; urea degradation; CO(2) and NH(3) from urea (urease route): step 1/1. The sequence is that of Urease subunit gamma from Streptomyces coelicolor (strain ATCC BAA-471 / A3(2) / M145).